Reading from the N-terminus, the 547-residue chain is ATP synthase subunit alpha (547 aa).

Residue 173–180 (GDRQTGKT) coordinates ATP.

Belongs to the ATPase alpha/beta chains family. F-type ATPases have 2 components, CF(1) - the catalytic core - and CF(0) - the membrane proton channel. CF(1) has five subunits: alpha(3), beta(3), gamma(1), delta(1), epsilon(1). CF(0) has three main subunits: a(1), b(2) and c(9-12). The alpha and beta chains form an alternating ring which encloses part of the gamma chain. CF(1) is attached to CF(0) by a central stalk formed by the gamma and epsilon chains, while a peripheral stalk is formed by the delta and b chains.

It localises to the cell membrane. The catalysed reaction is ATP + H2O + 4 H(+)(in) = ADP + phosphate + 5 H(+)(out). In terms of biological role, produces ATP from ADP in the presence of a proton gradient across the membrane. The alpha chain is a regulatory subunit. The protein is ATP synthase subunit alpha of Thermobifida fusca (strain YX).